The chain runs to 581 residues: Arginine--tRNA ligase (581 aa).

Positions 122 to 132 match the 'HIGH' region motif; the sequence is PNVAKPMHVGH.

It belongs to the class-I aminoacyl-tRNA synthetase family. As to quaternary structure, monomer.

It is found in the cytoplasm. It catalyses the reaction tRNA(Arg) + L-arginine + ATP = L-arginyl-tRNA(Arg) + AMP + diphosphate. The chain is Arginine--tRNA ligase from Francisella tularensis subsp. holarctica (strain FTNF002-00 / FTA).